The primary structure comprises 570 residues: Periplasmic trehalase (570 aa).

Positions Met1–Ala34 are cleaved as a signal peptide. Substrate-binding positions include Arg159, Trp166 to Asp167, Asn203, Arg212 to Gln214, Arg284 to Glu286, and Gly317. Catalysis depends on proton donor/acceptor residues Asp319 and Glu503. A substrate-binding site is contributed by Glu518. The tract at residues Lys544–Gln570 is disordered. Over residues Pro554–Gln570 the composition is skewed to low complexity.

It belongs to the glycosyl hydrolase 37 family. As to quaternary structure, monomer.

It is found in the periplasm. It carries out the reaction alpha,alpha-trehalose + H2O = alpha-D-glucose + beta-D-glucose. In terms of biological role, provides the cells with the ability to utilize trehalose at high osmolarity by splitting it into glucose molecules that can subsequently be taken up by the phosphotransferase-mediated uptake system. The sequence is that of Periplasmic trehalase from Salmonella paratyphi A (strain AKU_12601).